Here is a 244-residue protein sequence, read N- to C-terminus: ATP synthase subunit b 2 (244 aa).

A helical transmembrane segment spans residues 2–22 (TVDWWTIGLQVINVSVLIWLL).

It belongs to the ATPase B chain family. In terms of assembly, F-type ATPases have 2 components, F(1) - the catalytic core - and F(0) - the membrane proton channel. F(1) has five subunits: alpha(3), beta(3), gamma(1), delta(1), epsilon(1). F(0) has three main subunits: a(1), b(2) and c(10-14). The alpha and beta chains form an alternating ring which encloses part of the gamma chain. F(1) is attached to F(0) by a central stalk formed by the gamma and epsilon chains, while a peripheral stalk is formed by the delta and b chains.

The protein localises to the cell inner membrane. Functionally, f(1)F(0) ATP synthase produces ATP from ADP in the presence of a proton or sodium gradient. F-type ATPases consist of two structural domains, F(1) containing the extramembraneous catalytic core and F(0) containing the membrane proton channel, linked together by a central stalk and a peripheral stalk. During catalysis, ATP synthesis in the catalytic domain of F(1) is coupled via a rotary mechanism of the central stalk subunits to proton translocation. In terms of biological role, component of the F(0) channel, it forms part of the peripheral stalk, linking F(1) to F(0). The protein is ATP synthase subunit b 2 of Gluconobacter oxydans (strain 621H) (Gluconobacter suboxydans).